The sequence spans 262 residues: Ribosomal RNA small subunit methyltransferase A (262 aa).

S-adenosyl-L-methionine contacts are provided by N14, L16, G41, E62, D87, and N109.

This sequence belongs to the class I-like SAM-binding methyltransferase superfamily. rRNA adenine N(6)-methyltransferase family. RsmA subfamily.

It localises to the cytoplasm. The catalysed reaction is adenosine(1518)/adenosine(1519) in 16S rRNA + 4 S-adenosyl-L-methionine = N(6)-dimethyladenosine(1518)/N(6)-dimethyladenosine(1519) in 16S rRNA + 4 S-adenosyl-L-homocysteine + 4 H(+). Functionally, specifically dimethylates two adjacent adenosines (A1518 and A1519) in the loop of a conserved hairpin near the 3'-end of 16S rRNA in the 30S particle. May play a critical role in biogenesis of 30S subunits. The chain is Ribosomal RNA small subunit methyltransferase A from Francisella tularensis subsp. tularensis (strain FSC 198).